A 511-amino-acid polypeptide reads, in one-letter code: Lysine--tRNA ligase (511 aa).

The segment at 1-21 (MHTEKDPNKNTPEQQTPISLN) is disordered. Residues 9-21 (KNTPEQQTPISLN) show a composition bias toward polar residues. Mg(2+) is bound by residues Glu422 and Glu429.

Belongs to the class-II aminoacyl-tRNA synthetase family. In terms of assembly, homodimer. Requires Mg(2+) as cofactor.

It is found in the cytoplasm. The catalysed reaction is tRNA(Lys) + L-lysine + ATP = L-lysyl-tRNA(Lys) + AMP + diphosphate. In Pelodictyon phaeoclathratiforme (strain DSM 5477 / BU-1), this protein is Lysine--tRNA ligase.